A 777-amino-acid polypeptide reads, in one-letter code: Probable aconitate hydratase, mitochondrial (777 aa).

The transit peptide at 1-26 (MNSLLRLSHLAGPAHYRALHSSSSIW) directs the protein to the mitochondrion. Substrate contacts are provided by residues glutamine 96 and 189 to 191 (DSH). [4Fe-4S] cluster-binding residues include cysteine 382, cysteine 445, and cysteine 448. Residues arginine 471 and arginine 476 each coordinate substrate. Residues 534–555 (YDPGEDTFQAPSGSGQVDVSPS) form a disordered region. Polar residues predominate over residues 542–555 (QAPSGSGQVDVSPS). Substrate-binding positions include arginine 601 and 664 to 665 (SR).

It belongs to the aconitase/IPM isomerase family. As to quaternary structure, monomer. The cofactor is [4Fe-4S] cluster.

The protein resides in the mitochondrion. It carries out the reaction citrate = D-threo-isocitrate. It functions in the pathway carbohydrate metabolism; tricarboxylic acid cycle; isocitrate from oxaloacetate: step 2/2. Functionally, catalyzes the isomerization of citrate to isocitrate via cis-aconitate. The polypeptide is Probable aconitate hydratase, mitochondrial (Caenorhabditis elegans).